A 403-amino-acid polypeptide reads, in one-letter code: Large ribosomal subunit protein uL3 (403 aa).

Positions 1-37 (MSHRKFSAPRHGSLGFLPRKRSSRHRGKVKSFPKDDP) are disordered. Serine 13 bears the Phosphoserine mark. Positions 18–31 (PRKRSSRHRGKVKS) are enriched in basic residues. Lysine 39 is covalently cross-linked (Glycyl lysine isopeptide (Lys-Gly) (interchain with G-Cter in SUMO2)). Lysine 136 bears the N6-acetyllysine mark. Glycyl lysine isopeptide (Lys-Gly) (interchain with G-Cter in SUMO2) cross-links involve residues lysine 224 and lysine 226. The residue at position 245 (histidine 245) is a Tele-methylhistidine. Lysine 286 and lysine 294 each carry N6-acetyllysine; alternate. Lysine 286 is covalently cross-linked (Glycyl lysine isopeptide (Lys-Gly) (interchain with G-Cter in SUMO2); alternate). Lysine 294 participates in a covalent cross-link: Glycyl lysine isopeptide (Lys-Gly) (interchain with G-Cter in SUMO1); alternate. The residue at position 304 (serine 304) is a Phosphoserine. Lysine 366 bears the N6-acetyllysine; alternate mark. Residue lysine 366 forms a Glycyl lysine isopeptide (Lys-Gly) (interchain with G-Cter in SUMO2); alternate linkage. The residue at position 373 (lysine 373) is an N6-acetyllysine. Glycyl lysine isopeptide (Lys-Gly) (interchain with G-Cter in SUMO2) cross-links involve residues lysine 386, lysine 393, and lysine 399.

This sequence belongs to the universal ribosomal protein uL3 family. Component of the large ribosomal subunit. Interacts with DHX33. Constitutively monomethylated at His-245 by METTL18. Methylation at His-245 regulates translation elongation by slowing ribosome traversal on tyrosine codons: slower elongation provides enough time for proper folding of synthesized proteins and prevents cellular aggregation of tyrosine-rich proteins. It is not required for incorporation of RPL3 into ribosomes.

Its subcellular location is the nucleus. It is found in the nucleolus. It localises to the cytoplasm. Functionally, component of the large ribosomal subunit. The ribosome is a large ribonucleoprotein complex responsible for the synthesis of proteins in the cell. The protein is Large ribosomal subunit protein uL3 (Rpl3) of Rattus norvegicus (Rat).